A 522-amino-acid polypeptide reads, in one-letter code: Biotin-dependent long chain acyl-coenzyme A carboxylase beta4 subunit (522 aa).

One can recognise a CoA carboxyltransferase N-terminal domain in the interval 11–261; sequence TAEKLAELRE…NCFDKPPVVN (251 aa). One can recognise a CoA carboxyltransferase C-terminal domain in the interval 270 to 503; that stretch reads GHDLELDSIV…RLLLRKSMHL (234 aa).

This sequence belongs to the AccD/PCCB family. In terms of assembly, the biotin-dependent long-chain acyl-CoA carboxylase (LCC) complex is composed of AccA3, which contains the biotin carboxylase (BC) and biotin carboxyl carrier protein (BCCP) domains, and AccD4, which contains the carboxyl transferase (CT) domain. The complex also contains the beta5 subunit AccD5 and the epsilon subunit AccE5. The four subunits are essential for activity, but AccD5, together with AccE5, probably plays a structural role rather than a catalytic one.

In terms of biological role, component of a biotin-dependent acyl-CoA carboxylase complex. This subunit transfers the CO2 from carboxybiotin to the CoA ester substrate. When associated with the alpha3 subunit AccA3, the beta5 subunit AccD5 and the epsilon subunit AccE5, forms the LCC complex, which is involved in the carboxylation of long chain acyl-CoA. The LCC complex can use C16-C24 substrates, the highest specific activity is obtained with carboxy-C20-CoA. Has low activity with acetyl-CoA and propionyl-CoA. The protein is Biotin-dependent long chain acyl-coenzyme A carboxylase beta4 subunit of Mycobacterium tuberculosis (strain ATCC 25618 / H37Rv).